A 264-amino-acid chain; its full sequence is tRNA pseudouridine synthase A (264 aa).

Residue D51 is the Nucleophile of the active site. A substrate-binding site is contributed by Y109.

It belongs to the tRNA pseudouridine synthase TruA family. In terms of assembly, homodimer.

It catalyses the reaction uridine(38/39/40) in tRNA = pseudouridine(38/39/40) in tRNA. Its function is as follows. Formation of pseudouridine at positions 38, 39 and 40 in the anticodon stem and loop of transfer RNAs. In Pseudoalteromonas translucida (strain TAC 125), this protein is tRNA pseudouridine synthase A.